The following is a 122-amino-acid chain: Large ribosomal subunit protein uL14c (122 aa).

Belongs to the universal ribosomal protein uL14 family. In terms of assembly, part of the 50S ribosomal subunit.

It localises to the plastid. It is found in the chloroplast. Binds to 23S rRNA. This chain is Large ribosomal subunit protein uL14c, found in Morus indica (Mulberry).